The following is a 110-amino-acid chain: Class I hydrophobin Po.HYD (110 aa).

An N-terminal signal peptide occupies residues Met-1–Thr-27. Cystine bridges form between Cys-35–Cys-91, Cys-42–Cys-85, Cys-43–Cys-75, and Cys-92–Cys-105.

It belongs to the fungal hydrophobin family. In terms of assembly, self-assembles to form functional amyloid fibrils called rodlets. Self-assembly into fibrillar rodlets occurs spontaneously at hydrophobic:hydrophilic interfaces and the rodlets further associate laterally to form amphipathic monolayers.

The protein resides in the secreted. It localises to the cell wall. In terms of biological role, aerial growth, conidiation, and dispersal of filamentous fungi in the environment rely upon a capability of their secreting small amphipathic proteins called hydrophobins (HPBs) with low sequence identity. Class I can self-assemble into an outermost layer of rodlet bundles on aerial cell surfaces, conferring cellular hydrophobicity that supports fungal growth, development and dispersal; whereas Class II form highly ordered films at water-air interfaces through intermolecular interactions but contribute nothing to the rodlet structure. This is Class I hydrophobin Po.HYD from Pleurotus ostreatus (Oyster mushroom).